The following is a 236-amino-acid chain: Lipid A 4'-phosphatase (236 aa).

5 consecutive transmembrane segments (helical) span residues 26–46, 58–78, 134–153, 160–182, and 200–220; these read FFYLISAKWTWVIMSIAFLFF, FIVGAVLLSVLICDQLSSSFF, YTWTIWSVVALVIYSRIYIG, IIPGIAVGLIVGHFVYKVYLYAR, and GDSIRLWTLSLIGFVFAMLCM.

The protein belongs to the lipid A LpxF 4'-phosphatase family.

It localises to the cell inner membrane. Its pathway is bacterial outer membrane biogenesis; LPS lipid A biosynthesis. Removes the 4'-phosphate group from lipid A species. Absence of phosphate groups in lipid A renders the bacteria resistant to host-derived cationic antimicrobial peptides (CAMP) and allows it to camouflage itself from the host innate immune response. Removal of the 4'-phosphate may be required to generate the substrate for deacylation of the pentaacyl lipid A to the tetraccylated lipid A species. This is Lipid A 4'-phosphatase from Porphyromonas gingivalis (strain ATCC 33277 / DSM 20709 / CIP 103683 / JCM 12257 / NCTC 11834 / 2561).